Here is a 68-residue protein sequence, read N- to C-terminus: Beta-defensin 1 (68 aa).

Positions 1–21 (MRTSYLLLFTLCLLLSEMASG) are cleaved as a signal peptide. Residues 22–32 (GNFLTGLGHRS) constitute a propeptide that is removed on maturation. 3 cysteine pairs are disulfide-bonded: Cys37–Cys66, Cys44–Cys59, and Cys49–Cys67.

The protein belongs to the beta-defensin family. In terms of assembly, monomer. Homodimer.

The protein localises to the secreted. The protein resides in the membrane. Its function is as follows. Has bactericidal activity. May act as a ligand for C-C chemokine receptor CCR6. Positively regulates the sperm motility and bactericidal activity in a CCR6-dependent manner. Binds to CCR6 and triggers Ca2+ mobilization in the sperm which is important for its motility. This is Beta-defensin 1 (DEFB1) from Pongo pygmaeus (Bornean orangutan).